The primary structure comprises 416 residues: Exodeoxyribonuclease 7 large subunit (416 aa).

This sequence belongs to the XseA family. Heterooligomer composed of large and small subunits.

It is found in the cytoplasm. It carries out the reaction Exonucleolytic cleavage in either 5'- to 3'- or 3'- to 5'-direction to yield nucleoside 5'-phosphates.. Functionally, bidirectionally degrades single-stranded DNA into large acid-insoluble oligonucleotides, which are then degraded further into small acid-soluble oligonucleotides. This chain is Exodeoxyribonuclease 7 large subunit, found in Nitratiruptor sp. (strain SB155-2).